The sequence spans 549 residues: Glucose-6-phosphate isomerase (549 aa).

Glutamate 353 serves as the catalytic Proton donor. Residues histidine 384 and lysine 513 contribute to the active site.

It belongs to the GPI family.

It localises to the cytoplasm. The enzyme catalyses alpha-D-glucose 6-phosphate = beta-D-fructose 6-phosphate. It participates in carbohydrate biosynthesis; gluconeogenesis. It functions in the pathway carbohydrate degradation; glycolysis; D-glyceraldehyde 3-phosphate and glycerone phosphate from D-glucose: step 2/4. In terms of biological role, catalyzes the reversible isomerization of glucose-6-phosphate to fructose-6-phosphate. This is Glucose-6-phosphate isomerase from Bartonella bacilliformis (strain ATCC 35685 / KC583 / Herrer 020/F12,63).